The sequence spans 100 residues: MTLTKADLADLLFEQVGLNKREAKDMVEAFFEEIRMALEAGDSVKLSGFGNFELRQKSERPGRNPKTGEEIPITARRVVTFHASQKLKSKVEEAYAGAST.

Belongs to the bacterial histone-like protein family. In terms of assembly, heterodimer of an alpha and a beta chain.

In terms of biological role, this protein is one of the two subunits of integration host factor, a specific DNA-binding protein that functions in genetic recombination as well as in transcriptional and translational control. This is Integration host factor subunit alpha from Methylobacillus flagellatus (strain ATCC 51484 / DSM 6875 / VKM B-1610 / KT).